The sequence spans 397 residues: 16-O-methyltransferase bsc6 (397 aa).

An S-adenosyl-L-methionine-binding site is contributed by Asp-262. His-302 (proton acceptor) is an active-site residue.

The protein belongs to the class I-like SAM-binding methyltransferase superfamily. Cation-independent O-methyltransferase family. The cofactor is S-adenosyl-L-methionine.

The protein operates within mycotoxin biosynthesis. 16-O-methyltransferase; part of the gene cluster that mediates the biosynthesis of the diterpene glucoside brassicicene C. In the first step of the brassicicene C biosynthesis, the bifunctional diterpene synthase bsc8 that possesses both prenyl transferase and terpene cyclase activity, converts isopentenyl diphosphate and dimethylallyl diphosphate into geranylgeranyl diphosphate (GGDP) that is further converted into fusicocca-2,10(14)-diene, the first precursor for brassicicene C. Fusicocca-2,10(14)-diene is then substrate of cytochrome P450 monooxygenase bsc1 for hydroxylation at the C-8 position. Oxidation at C-16 position to aldehyde is then catalyzed by the cytochrome P450 monooyxygenase bsc7, yielding fusicocca-2,10(14)-diene-8-beta,16-diol. Follows the isomerization of the double bond and reduction of aldehyde to alcohol catalyzed by the short-chain dehydrogenase/reductase bsc3 to yield the diol compound fusicocca-1,10(14)-diene-8 beta,16-diol. The next step is the oxidation at the C-3 position of fusicocca-2,10(14)-diene-8-beta,16-diol catalyzed by the alpha-ketoglutarate dependent dioxygenase bsc9, to produce a triol compound. Methylation of the hydroxy group at position 16 is performed by the methyltransferase bsc6. 16-O-methylation is followed by oxidation at the C-13 position to ketone and an alkyl shift of the methyl group leads to brassicicene C. Although the probable acetyltransferase bsc4 is included in the gene cluster, no acetylation reactions are necessary for brassicicene C biosynthesis. However, the fact that brassicicene E, which is a structurally related compound having an acetoxy group at position 12, was previously isolated from another strain of A.brassicicola suggests that the ATCC 96836 strain might also produce a small amount of brassicicene E. This is 16-O-methyltransferase bsc6 from Alternaria brassicicola (Dark leaf spot agent).